We begin with the raw amino-acid sequence, 335 residues long: Fructose-1,6-bisphosphatase class 1 (335 aa).

Glutamate 90, aspartate 113, leucine 115, and aspartate 116 together coordinate Mg(2+). Substrate is bound by residues 116-119, asparagine 209, tyrosine 242, and lysine 272; that span reads DGSS. Glutamate 278 contributes to the Mg(2+) binding site.

Belongs to the FBPase class 1 family. As to quaternary structure, homotetramer. The cofactor is Mg(2+).

The protein resides in the cytoplasm. It carries out the reaction beta-D-fructose 1,6-bisphosphate + H2O = beta-D-fructose 6-phosphate + phosphate. It functions in the pathway carbohydrate biosynthesis; gluconeogenesis. The protein is Fructose-1,6-bisphosphatase class 1 of Mannheimia succiniciproducens (strain KCTC 0769BP / MBEL55E).